The following is a 195-amino-acid chain: E3 ubiquitin-protein ligase ZNRF1 (195 aa).

A compositionally biased stretch (polar residues) spans 1–10 (MGGKQSSASR). The segment at 1-37 (MGGKQSSASRSRAPFPGVSSDDSAVPPSSNFGHFRGG) is disordered. Glycine 2 carries the N-myristoyl glycine lipid modification. The span at 18 to 29 (VSSDDSAVPPSS) shows a compositional bias: low complexity. An RING-type; atypical zinc finger spans residues 152 to 193 (CVICLEELSQGDTIARLPCLCIYHKSCIDSWFEVNRCCPEHP).

Its subcellular location is the endosome. It localises to the lysosome. It is found in the membrane. It catalyses the reaction S-ubiquitinyl-[E2 ubiquitin-conjugating enzyme]-L-cysteine + [acceptor protein]-L-lysine = [E2 ubiquitin-conjugating enzyme]-L-cysteine + N(6)-ubiquitinyl-[acceptor protein]-L-lysine.. It participates in protein modification; protein ubiquitination. In terms of biological role, E3 ubiquitin-protein ligase that plays a role in neuron cells differentiation. Plays a role in the establishment and maintenance of neuronal transmission and plasticity. The chain is E3 ubiquitin-protein ligase ZNRF1 (znrf1) from Xenopus laevis (African clawed frog).